The following is a 58-amino-acid chain: Small ribosomal subunit protein bS21 (58 aa).

The interval 30–58 is disordered; sequence SEVRKREHYEKPSVKRKKKSEAARKRKFK. Positions 31–42 are enriched in basic and acidic residues; sequence EVRKREHYEKPS. Residues 43–58 show a composition bias toward basic residues; sequence VKRKKKSEAARKRKFK.

Belongs to the bacterial ribosomal protein bS21 family.

The polypeptide is Small ribosomal subunit protein bS21 (Clostridium perfringens (strain ATCC 13124 / DSM 756 / JCM 1290 / NCIMB 6125 / NCTC 8237 / Type A)).